Here is a 34-residue protein sequence, read N- to C-terminus: Small, acid-soluble spore protein M (34 aa).

Positions 1 to 10 (MKTRPKKAGQ) are enriched in basic residues. The interval 1–34 (MKTRPKKAGQQKKTESKAIDSLDKKLGGPNRPST) is disordered. Basic and acidic residues predominate over residues 12 to 26 (KKTESKAIDSLDKKL).

The protein localises to the spore core. This Bacillus subtilis (strain 168) protein is Small, acid-soluble spore protein M (sspM).